A 239-amino-acid polypeptide reads, in one-letter code: MIAELIREIGIEGARFIEENIDEQFKALSYLSEGMDRVNFVRLVIANALVSYQLTGKGEMWWWEFAKYFKGKEVKTIYSAYKEFLPNSKFNRRLIQQKLLRIKKIEPFLSTLTEESIERYYEDMTLLWKAIAKVLKVDRESKTVVFSVKMFGYAARIVLSKFNPYPMEIPIPEDVRIIKLTRKLTNERPRDFWMKIAKESNVPPLHIDSILWPLLGGARVEEAPPELKEKLEKLIRVIR.

8-oxoguanine-binding residues include Q24, S51, and W62. Residues 118–182 (ERYYEDMTLL…EDVRIIKLTR (65 aa)) are helix-hairpin-helix. The active-site Schiff-base intermediate with DNA is K142. Residues F146 and P172 each contribute to the 8-oxoguanine site. Residue D174 is part of the active site. 2 residues coordinate 8-oxoguanine: D208 and W212.

The protein belongs to the archaeal N-glycosylase/DNA lyase (AGOG) family.

It carries out the reaction 2'-deoxyribonucleotide-(2'-deoxyribose 5'-phosphate)-2'-deoxyribonucleotide-DNA = a 3'-end 2'-deoxyribonucleotide-(2,3-dehydro-2,3-deoxyribose 5'-phosphate)-DNA + a 5'-end 5'-phospho-2'-deoxyribonucleoside-DNA + H(+). DNA repair enzyme that is part of the base excision repair (BER) pathway; protects from oxidative damage by removing the major product of DNA oxidation, 8-oxoguanine (GO), from single- and double-stranded DNA substrates. The protein is N-glycosylase/DNA lyase of Pyrococcus horikoshii (strain ATCC 700860 / DSM 12428 / JCM 9974 / NBRC 100139 / OT-3).